The following is a 448-amino-acid chain: Trigger factor (448 aa).

A PPIase FKBP-type domain is found at Gly172–Pro257.

The protein belongs to the FKBP-type PPIase family. Tig subfamily.

It is found in the cytoplasm. It catalyses the reaction [protein]-peptidylproline (omega=180) = [protein]-peptidylproline (omega=0). Its function is as follows. Involved in protein export. Acts as a chaperone by maintaining the newly synthesized protein in an open conformation. Functions as a peptidyl-prolyl cis-trans isomerase. The sequence is that of Trigger factor from Burkholderia lata (strain ATCC 17760 / DSM 23089 / LMG 22485 / NCIMB 9086 / R18194 / 383).